A 432-amino-acid chain; its full sequence is Amino-acid acetyltransferase (432 aa).

One can recognise an N-acetyltransferase domain in the interval 286 to 425 (ERVREAAIED…ASLYNYQRNS (140 aa)).

It belongs to the acetyltransferase family. ArgA subfamily.

The protein localises to the cytoplasm. The catalysed reaction is L-glutamate + acetyl-CoA = N-acetyl-L-glutamate + CoA + H(+). Its pathway is amino-acid biosynthesis; L-arginine biosynthesis; N(2)-acetyl-L-ornithine from L-glutamate: step 1/4. This is Amino-acid acetyltransferase from Pseudomonas fluorescens (strain ATCC BAA-477 / NRRL B-23932 / Pf-5).